We begin with the raw amino-acid sequence, 593 residues long: A-type ATP synthase subunit A (593 aa).

236-243 (GPFGSGKT) lines the ATP pocket.

The protein belongs to the ATPase alpha/beta chains family. In terms of assembly, has multiple subunits with at least A(3), B(3), C, D, E, F, H, I and proteolipid K(x).

It localises to the cell membrane. It catalyses the reaction ATP + H2O + 4 H(+)(in) = ADP + phosphate + 5 H(+)(out). Component of the A-type ATP synthase that produces ATP from ADP in the presence of a proton gradient across the membrane. The A chain is the catalytic subunit. This chain is A-type ATP synthase subunit A, found in Pyrobaculum islandicum (strain DSM 4184 / JCM 9189 / GEO3).